Here is a 173-residue protein sequence, read N- to C-terminus: Translation initiation factor IF-3 (173 aa).

This sequence belongs to the IF-3 family. In terms of assembly, monomer.

It is found in the cytoplasm. IF-3 binds to the 30S ribosomal subunit and shifts the equilibrium between 70S ribosomes and their 50S and 30S subunits in favor of the free subunits, thus enhancing the availability of 30S subunits on which protein synthesis initiation begins. In Caulobacter sp. (strain K31), this protein is Translation initiation factor IF-3.